Consider the following 570-residue polypeptide: MAIKEETEESCGSRAVVASITKESPRQHRMKLEVYGEVLQRIQESNYEEANFPGFDDLLWLHFNRLPARYALDVNVERAEDVLTHQRLLKLAEDPATRPVFEVRCVQVSPTLNGNSGDVDPSDPAVNEDAQSSYNSRSLAPPTFGSSPNFEALTQAYKDHAQDDDSAVNAQLPNSRPMHEITFSTIDRPKLLSQLTSMLGELGLNIQEAHAFSTADGFSLDVFVVDGWSQEETEGLKDALKKEIRKFKDQPCSKQKSITFFEHDKSTNELLPACVEIPTDGTDEWEIDMKQLKIEKKVACGSYGELFRGTYCSQEVAIKILKPERVNAEMLREFSQEVYIMRKVRHKNVVQFIGACTRSPNLCIVTEFMTRGSIYDFLHKHKGVFKIQSLLKVALDVSKGMNYLHQNNIIHRDLKTANLLMDEHEVVKVADFGVARVQTESGVMTAETGTYRWMAPEVIEHKPYDHRADVFSYAIVLWELLTGELPYSYLTPLQAAVGVVQKGLRPKIPKETHPKLTELLEKCWQQDPALRPNFAEIIEMLNQLIREVGDDERHKDKHGGYFSGLKKGHR.

A disordered region spans residues 112–145 (LNGNSGDVDPSDPAVNEDAQSSYNSRSLAPPTFG). Polar residues predominate over residues 129 to 145 (DAQSSYNSRSLAPPTFG). One can recognise an ACT domain in the interval 180-260 (EITFSTIDRP…PCSKQKSITF (81 aa)). The Protein kinase domain maps to 292-545 (LKIEKKVACG…EIIEMLNQLI (254 aa)). ATP-binding positions include 298-306 (VACGSYGEL) and lysine 319. Catalysis depends on aspartate 413, which acts as the Proton acceptor. Phosphoserine is present on serine 441. Threonine 445 bears the Phosphothreonine mark.

This sequence belongs to the protein kinase superfamily. Ser/Thr protein kinase family. Post-translationally, autophosphorylated on serine and threonine residues. Autophosphorylated at Thr-445.

The protein localises to the cytoplasm. It is found in the cytosol. It catalyses the reaction L-seryl-[protein] + ATP = O-phospho-L-seryl-[protein] + ADP + H(+). The enzyme catalyses L-threonyl-[protein] + ATP = O-phospho-L-threonyl-[protein] + ADP + H(+). Its activity is regulated as follows. Activated by autophosphorylation at Thr-445. Serine/threonine protein kinase that specifically phosphorylates chloroplast precursor proteins in the cytosol within the cleavable presequences (transit peptides). May be part of a cytosolic regulatory network involved in chloroplast protein import. Does not phosphorylate mitochondrion precursor proteins. Specific for ATP and does not utilize other NTPs. Plays a role in chloroplast biogenesis and differentiation in cotyledons, possibly through phosphorylation of chloroplast preproteins. In Arabidopsis thaliana (Mouse-ear cress), this protein is Serine/threonine-protein kinase STY17.